The primary structure comprises 379 residues: Cytochrome b (379 aa).

A run of 4 helical transmembrane segments spans residues 33-53, 77-98, 113-133, and 178-198; these read FGSL…FLAM, WLIR…YLHI, WNIG…GYVL, and FFAF…LHLL. Heme b contacts are provided by His-83 and His-97. Heme b-binding residues include His-182 and His-196. His-201 is a binding site for a ubiquinone. Transmembrane regions (helical) follow at residues 226–246, 288–308, 320–340, and 347–367; these read YKDL…ALFY, LGGV…PILH, ASQL…WIGG, and YIII…VLNP.

Belongs to the cytochrome b family. The cytochrome bc1 complex contains 3 respiratory subunits (MT-CYB, CYC1 and UQCRFS1), 2 core proteins (UQCRC1 and UQCRC2) and probably 6 low-molecular weight proteins. It depends on heme b as a cofactor.

The protein resides in the mitochondrion inner membrane. Its function is as follows. Component of the ubiquinol-cytochrome c reductase complex (complex III or cytochrome b-c1 complex) that is part of the mitochondrial respiratory chain. The b-c1 complex mediates electron transfer from ubiquinol to cytochrome c. Contributes to the generation of a proton gradient across the mitochondrial membrane that is then used for ATP synthesis. This is Cytochrome b (mt-cyb) from Anguilla anguilla (European freshwater eel).